The sequence spans 109 residues: UPF0060 membrane protein mma_0129 (109 aa).

The next 4 helical transmembrane spans lie at valine 7–tryptophan 27, glycine 31–leucine 51, alanine 63–isoleucine 83, and asparagine 87–proline 107.

This sequence belongs to the UPF0060 family.

The protein localises to the cell inner membrane. The chain is UPF0060 membrane protein mma_0129 from Janthinobacterium sp. (strain Marseille) (Minibacterium massiliensis).